The primary structure comprises 488 residues: Ribulose bisphosphate carboxylase large chain 2 (488 aa).

Asn128 and Thr178 together coordinate substrate. Lys180 acts as the Proton acceptor in catalysis. A substrate-binding site is contributed by Lys182. The Mg(2+) site is built by Lys206, Asp208, and Glu209. Lys206 is modified (N6-carboxylysine). The active-site Proton acceptor is His298. Substrate is bound by residues Arg299, His331, and Ser383.

It belongs to the RuBisCO large chain family. Type I subfamily. In terms of assembly, heterohexadecamer of 8 large chains and 8 small chains. The cofactor is Mg(2+).

It catalyses the reaction 2 (2R)-3-phosphoglycerate + 2 H(+) = D-ribulose 1,5-bisphosphate + CO2 + H2O. The enzyme catalyses D-ribulose 1,5-bisphosphate + O2 = 2-phosphoglycolate + (2R)-3-phosphoglycerate + 2 H(+). In terms of biological role, ruBisCO catalyzes two reactions: the carboxylation of D-ribulose 1,5-bisphosphate, the primary event in carbon dioxide fixation, as well as the oxidative fragmentation of the pentose substrate. Both reactions occur simultaneously and in competition at the same active site. This chain is Ribulose bisphosphate carboxylase large chain 2, found in Nitrobacter hamburgensis (strain DSM 10229 / NCIMB 13809 / X14).